We begin with the raw amino-acid sequence, 601 residues long: Keratin, type II cytoskeletal 5 (601 aa).

A head region spans residues 1-168; it reads MSRQSTVSFR…DPTIQRVRTE (168 aa). 4 positions are modified to phosphoserine: Ser-5, Ser-8, Ser-16, and Ser-21. Thr-24 bears the Phosphothreonine; by CDK1 mark. Ser-26, Ser-36, Ser-50, Ser-64, Ser-71, and Ser-75 each carry phosphoserine. At Thr-152 the chain carries Phosphothreonine; by CDK1. A Phosphothreonine; by AURKB modification is found at Thr-167. Residues 169–204 form a coil 1A region; the sequence is EREQIKTLNNKFASFIDKVRFLEQQNKVLDTKWALL. In terms of domain architecture, IF rod spans 169–482; that stretch reads EREQIKTLNN…KLLEGEECRL (314 aa). The segment at 205–223 is linker 1; it reads QEQGTKTVRQNLEPLLEQY. Residues 224 to 316 form a coil 1B region; that stretch reads INNLRRQLDG…FFDAELSQMQ (93 aa). Residues 317-339 form a linker 12 region; the sequence is THVSDTSVVLSMDNNRSLDLDSI. The interval 340–478 is coil 2; the sequence is IAEVKAQYED…ATYRKLLEGE (139 aa). Positions 479 to 601 are tail; that stretch reads ECRLSGEGVG…TSSSRKSFKS (123 aa). The interval 576–601 is disordered; that stretch reads FGSGGGSSSSVKFVSTTSSSRKSFKS. Positions 583–601 are enriched in low complexity; it reads SSSVKFVSTTSSSRKSFKS.

Belongs to the intermediate filament family. Heterodimer of a type I and a type II keratin. Heterodimer with type I keratin KRT25 leading to the formation of keratin intermediate filament (KIF) network. Forms a heterodimer (via 2B domains) with KRT14 (via 2B domains). Interacts with TCHP. Interacts with EPPK1. Interacts with AMELX. Interacts with PKP1 (via N-terminus) and PKP2. Post-translationally, phosphorylated by CDK1, AURKB and Rho-kinase, phosphorylation is regulated by the cell cycle. Thr-24 phosphorylation, mediated by CDK1, peaks during prometaphase or metaphase cells with phosphorylated filamentous structures evident throughout the cytoplasm early mitosis. CDK1 phosphorylates Thr-24 in mitotic cells at the site of injury. In terms of processing, O-glycosylated.

Its subcellular location is the cytoplasm. Its function is as follows. Required for the formation of keratin intermediate filaments in the basal epidermis and maintenance of the skin barrier in response to mechanical stress. Regulates the recruitment of Langerhans cells to the epidermis, potentially by modulation of the abundance of macrophage chemotactic cytokines, macrophage inflammatory cytokines and CTNND1 localization in keratinocytes. The protein is Keratin, type II cytoskeletal 5 of Bos taurus (Bovine).